A 149-amino-acid polypeptide reads, in one-letter code: Calmodulin (149 aa).

Position 2 is an N-acetylalanine (Ala2). EF-hand domains follow at residues 8 to 43, 44 to 79, 81 to 116, and 117 to 149; these read EQIA…LGQN, PTEA…KMKD, DSEE…LGEK, and LTDE…MMAK. Positions 21, 23, 25, 27, 32, 57, 59, 61, 63, 68, 94, 96, 98, and 105 each coordinate Ca(2+). Lys116 is subject to N6,N6,N6-trimethyllysine. Positions 130, 132, 134, 136, and 141 each coordinate Ca(2+).

It belongs to the calmodulin family.

Its function is as follows. Calmodulin mediates the control of a large number of enzymes, ion channels and other proteins by Ca(2+). Among the enzymes to be stimulated by the calmodulin-Ca(2+) complex are a number of protein kinases and phosphatases. This Triticum aestivum (Wheat) protein is Calmodulin.